The following is a 304-amino-acid chain: Ribonuclease HII (304 aa).

Residues 1 to 53 (MIRDTKQPIKVPAKPASRSGGKAKTVKPKTVKPKAVKAADGKAASAKASTSKA) are disordered. A compositionally biased stretch (basic residues) spans 24–35 (KTVKPKTVKPKA). The span at 36 to 53 (VKAADGKAASAKASTSKA) shows a compositional bias: low complexity. The RNase H type-2 domain maps to 96–284 (WPIAGCDEAG…VAAAWQKIEG (189 aa)). 3 residues coordinate a divalent metal cation: aspartate 102, glutamate 103, and aspartate 193.

This sequence belongs to the RNase HII family. It depends on Mn(2+) as a cofactor. Mg(2+) serves as cofactor.

It localises to the cytoplasm. It catalyses the reaction Endonucleolytic cleavage to 5'-phosphomonoester.. Endonuclease that specifically degrades the RNA of RNA-DNA hybrids. This chain is Ribonuclease HII, found in Rhodopseudomonas palustris (strain ATCC BAA-98 / CGA009).